Reading from the N-terminus, the 641-residue chain is Probable potassium transport system protein Kup (641 aa).

Transmembrane regions (helical) follow at residues Ile-29–Ile-49, Ile-66–Leu-86, Trp-119–Thr-139, Pro-156–Phe-176, Gly-185–Ile-205, Leu-231–Tyr-251, Trp-266–Leu-286, Ala-298–Ile-318, Ile-356–Phe-376, Ala-384–Val-404, Val-415–Met-435, and Leu-438–Thr-458.

This sequence belongs to the HAK/KUP transporter (TC 2.A.72) family.

It is found in the cell inner membrane. It carries out the reaction K(+)(in) + H(+)(in) = K(+)(out) + H(+)(out). Its function is as follows. Transport of potassium into the cell. Likely operates as a K(+):H(+) symporter. This chain is Probable potassium transport system protein Kup, found in Chlorobium phaeovibrioides (strain DSM 265 / 1930) (Prosthecochloris vibrioformis (strain DSM 265)).